Reading from the N-terminus, the 211-residue chain is MKLWDVVAVCLVLLHTASAFPLPAGKRPPEAPAEDRSLGRRRAPFALSSDSNMPEDYPDQFDDVMDFIQATIKRLKRSPDKQMAVLPRRERNRQAAAANPENSRGKGRRGQRGKNRGCVLTAIHLNVTDLGLGYETKEELIFRYCSGSCDAAETTYDKILKNLSRNRRLVSDKVGQACCRPIAFDDDLSFLDDNLVYHILRKHSAKRCGCI.

Residues 1–19 (MKLWDVVAVCLVLLHTASA) form the signal peptide. A propeptide spanning residues 20-75 (FPLPAGKRPPEAPAEDRSLGRRRAPFALSSDSNMPEDYPDQFDDVMDFIQATIKRL) is cleaved from the precursor. 2 disordered regions span residues 21–56 (PLPA…MPED) and 78–113 (SPDK…GQRG). Residues 27–38 (RPPEAPAEDRSL) show a composition bias toward basic and acidic residues. Intrachain disulfides connect Cys-118-Cys-179, Cys-145-Cys-208, and Cys-149-Cys-210. Residues Asn-126 and Asn-162 are each glycosylated (N-linked (GlcNAc...) asparagine).

It belongs to the TGF-beta family. GDNF subfamily. As to quaternary structure, homodimer; disulfide-linked. Interacts with GFRA1 coreceptor and RET: forms a 2:2:2 ternary complex composed of GDNF ligand, GFRA1 and RET receptor. Interacts (via propeptide) with SORL1 (via N-terminal ectodomain); this interaction affects GDNF-regulated, but not constitutive secretion. Also interacts with SORL1 in complex with GFRA1; this interaction leads to GDNF endocytosis and lysosomal degradation. In terms of tissue distribution, in the brain, predominantly expressed in the striatum with highest levels in the caudate and lowest in the putamen. Isoform 2 is absent from most tissues except for low levels in intestine and kidney. Highest expression of isoform 3 is found in pancreatic islets. Isoform 5 is expressed at very low levels in putamen, nucleus accumbens, prefrontal cortex, amygdala, hypothalamus and intestine. Isoform 3 is up-regulated in the middle temporal gyrus of Alzheimer disease patients while isoform 2 shows no change.

The protein resides in the secreted. Its function is as follows. Neurotrophic factor that enhances survival and morphological differentiation of dopaminergic neurons and increases their high-affinity dopamine uptake. Acts by binding to its coreceptor, GFRA1, leading to autophosphorylation and activation of the RET receptor. Involved in the development of the neural crest. The polypeptide is Glial cell line-derived neurotrophic factor (GDNF) (Homo sapiens (Human)).